A 488-amino-acid chain; its full sequence is Multidrug resistance outer membrane protein MdtP (488 aa).

The signal sequence occupies residues 1-23; that stretch reads MINRQLSRLLLCSILGSTTLISG. The N-palmitoyl cysteine moiety is linked to residue Cys-24. Cys-24 carries the S-diacylglycerol cysteine lipid modification.

It belongs to the outer membrane factor (OMF) (TC 1.B.17) family. Could be part of a tripartite efflux system composed of MdtN, MdtO and MdtP.

The protein localises to the cell outer membrane. Its function is as follows. Could be involved in resistance to puromycin, acriflavine and tetraphenylarsonium chloride. The protein is Multidrug resistance outer membrane protein MdtP (mdtP) of Escherichia coli (strain K12).